The following is a 613-amino-acid chain: MPAYRSRTSTHGRNMAGARGLWRATGMKNEDFGKPIIAVVNSFTQFVPGHVHLKDLGQLVAREIEKAGGVAKEFNTIAVDDGIAMGHDGMLYSLPSREIIADSVEYMVNAHCADAMVCISNCDKITPGMLMAALRLNVPAVFVSGGPMESGKVNVNGKIRSVDLIDAMVAAADDSVSDADVEAIERSACPTCGSCSGMFTANSMNCLTEALGLALPGNGSVLATHADRKGLFVEAGHLIVDLARRYYEQDDARVLPRAIASFKAFENAMTLDISMGGSTNTVLHLLAAAYEGEVPFTMKDIDRLSRRVPVLCKVAPSVVDVHLEDVHRAGGIMGILGELDRAGLIDSSLPTVHSTSLKDGLERWDIKRTKSDSVRSFYLAAPGGVRTQVAFSQDKRFEELDADRSSGCIRDAEHAFSKDGGLAVLYGNIARDGCIVKTAGVDDSILTFSGPARIFESQDAAVDAILTNRIQPGDVVLIRYEGPRGGPGMQEMLYPTSYLKSKGLGKQCALITDGRFSGGSSGLSIGHVSPEAAEGGAIGLVEEGDRIVFDIPNRKVHLDVSDAELERRRAAMEAKGDKAWKPAPRKRRVTMALKAYAAHATSAALGAVRVVKD.

Asp-81 contributes to the Mg(2+) binding site. Residue Cys-122 participates in [2Fe-2S] cluster binding. The Mg(2+) site is built by Asp-123 and Lys-124. Residue Lys-124 is modified to N6-carboxylysine. Cys-195 contacts [2Fe-2S] cluster. Position 491 (Glu-491) interacts with Mg(2+). The active-site Proton acceptor is Ser-517.

This sequence belongs to the IlvD/Edd family. In terms of assembly, homodimer. [2Fe-2S] cluster is required as a cofactor. Requires Mg(2+) as cofactor.

It carries out the reaction (2R)-2,3-dihydroxy-3-methylbutanoate = 3-methyl-2-oxobutanoate + H2O. The catalysed reaction is (2R,3R)-2,3-dihydroxy-3-methylpentanoate = (S)-3-methyl-2-oxopentanoate + H2O. Its pathway is amino-acid biosynthesis; L-isoleucine biosynthesis; L-isoleucine from 2-oxobutanoate: step 3/4. It functions in the pathway amino-acid biosynthesis; L-valine biosynthesis; L-valine from pyruvate: step 3/4. Functions in the biosynthesis of branched-chain amino acids. Catalyzes the dehydration of (2R,3R)-2,3-dihydroxy-3-methylpentanoate (2,3-dihydroxy-3-methylvalerate) into 2-oxo-3-methylpentanoate (2-oxo-3-methylvalerate) and of (2R)-2,3-dihydroxy-3-methylbutanoate (2,3-dihydroxyisovalerate) into 2-oxo-3-methylbutanoate (2-oxoisovalerate), the penultimate precursor to L-isoleucine and L-valine, respectively. This is Dihydroxy-acid dehydratase from Nitrobacter hamburgensis (strain DSM 10229 / NCIMB 13809 / X14).